Reading from the N-terminus, the 460-residue chain is UDP-N-acetylmuramate--L-alanine ligase (460 aa).

An ATP-binding site is contributed by G118–T124.

Belongs to the MurCDEF family.

It is found in the cytoplasm. It catalyses the reaction UDP-N-acetyl-alpha-D-muramate + L-alanine + ATP = UDP-N-acetyl-alpha-D-muramoyl-L-alanine + ADP + phosphate + H(+). It functions in the pathway cell wall biogenesis; peptidoglycan biosynthesis. Cell wall formation. The protein is UDP-N-acetylmuramate--L-alanine ligase of Clostridium botulinum (strain Alaska E43 / Type E3).